Here is a 78-residue protein sequence, read N- to C-terminus: UPF0270 protein ECA4061 (78 aa).

The protein belongs to the UPF0270 family.

In Pectobacterium atrosepticum (strain SCRI 1043 / ATCC BAA-672) (Erwinia carotovora subsp. atroseptica), this protein is UPF0270 protein ECA4061.